The chain runs to 113 residues: Ig heavy chain V-III region A4 (113 aa).

An Ig-like domain is found at 1–113 (EVKLEESGGG…YWGQGTLVTV (113 aa)). A disulfide bridge connects residues Cys22 and Cys98.

This is Ig heavy chain V-III region A4 from Mus musculus (Mouse).